The chain runs to 1023 residues: Exportin-T (1023 aa).

This sequence belongs to the exportin family.

Its subcellular location is the nucleus. The protein resides in the cytoplasm. Functionally, tRNA nucleus export receptor which facilitates tRNA translocation across the nuclear pore complex. Involved in pre-tRNA splicing, probably by affecting the interaction of pre-tRNA with splicing endonuclease. In Sclerotinia sclerotiorum (strain ATCC 18683 / 1980 / Ss-1) (White mold), this protein is Exportin-T (los1).